Reading from the N-terminus, the 968-residue chain is Isoleucine--tRNA ligase (968 aa).

The 'HIGH' region motif lies at 68-78 (PYANGALHMGH). Glutamate 582 lines the L-isoleucyl-5'-AMP pocket. The 'KMSKS' region signature appears at 623 to 627 (KMSKS). Lysine 626 lines the ATP pocket. Zn(2+) is bound by residues cysteine 936, cysteine 939, cysteine 956, and cysteine 959.

This sequence belongs to the class-I aminoacyl-tRNA synthetase family. IleS type 1 subfamily. Monomer. Zn(2+) serves as cofactor.

It is found in the cytoplasm. The catalysed reaction is tRNA(Ile) + L-isoleucine + ATP = L-isoleucyl-tRNA(Ile) + AMP + diphosphate. Functionally, catalyzes the attachment of isoleucine to tRNA(Ile). As IleRS can inadvertently accommodate and process structurally similar amino acids such as valine, to avoid such errors it has two additional distinct tRNA(Ile)-dependent editing activities. One activity is designated as 'pretransfer' editing and involves the hydrolysis of activated Val-AMP. The other activity is designated 'posttransfer' editing and involves deacylation of mischarged Val-tRNA(Ile). The sequence is that of Isoleucine--tRNA ligase from Prochlorococcus marinus (strain MIT 9301).